A 245-amino-acid polypeptide reads, in one-letter code: Probable phosphatase YcdX (245 aa).

Residues H7, H9, H15, H40, E73, H101, H131, D192, and H194 each coordinate Zn(2+).

This sequence belongs to the PHP family. Homotrimer. It depends on Zn(2+) as a cofactor.

This Escherichia coli O81 (strain ED1a) protein is Probable phosphatase YcdX.